A 128-amino-acid chain; its full sequence is Large ribosomal subunit protein bL17 (128 aa).

Belongs to the bacterial ribosomal protein bL17 family. Part of the 50S ribosomal subunit. Contacts protein L32.

This chain is Large ribosomal subunit protein bL17, found in Streptococcus uberis (strain ATCC BAA-854 / 0140J).